A 432-amino-acid polypeptide reads, in one-letter code: N-acylneuraminate cytidylyltransferase (432 aa).

At methionine 1 the chain carries N-acetylmethionine. The segment at 1-38 is disordered; sequence MDALEKGAVTSGPAPRGRPSRGRPPKLQRSRGAGRGLE. The short motif at 15–31 is the BC1 motif element; the sequence is PRGRPSRGRPPKLQRSR. A compositionally biased stretch (basic residues) spans 18 to 29; it reads RPSRGRPPKLQR. Omega-N-methylarginine is present on residues arginine 35 and arginine 50. The substrate site is built by arginine 50, asparagine 60, arginine 109, serine 118, serine 120, and glutamine 141. The short motif at 198–204 is the BC2 motif element; the sequence is KRPRRQD. Arginine 199 is a catalytic residue. A BC3 motif motif is present at residues 267–274; it reads KEKLKEIK.

It belongs to the CMP-NeuNAc synthase family. In terms of assembly, homotetramer; the active enzyme is formed by a dimer of dimers. Highly expressed in brain and heart, and at intermediate level muscle and liver.

The protein resides in the nucleus. It catalyses the reaction an N-acylneuraminate + CTP = a CMP-N-acyl-beta-neuraminate + diphosphate. It functions in the pathway amino-sugar metabolism; N-acetylneuraminate metabolism. Functionally, catalyzes the activation of N-acetylneuraminic acid (NeuNAc) to cytidine 5'-monophosphate N-acetylneuraminic acid (CMP-NeuNAc), a substrate required for the addition of sialic acid. Has some activity toward NeuNAc, N-glycolylneuraminic acid (Neu5Gc) or 2-keto-3-deoxy-D-glycero-D-galacto-nononic acid (KDN). The polypeptide is N-acylneuraminate cytidylyltransferase (Cmas) (Mus musculus (Mouse)).